A 306-amino-acid chain; its full sequence is UDP-3-O-acyl-N-acetylglucosamine deacetylase (306 aa).

Zn(2+)-binding residues include His-79, His-238, and Asp-242. His-265 acts as the Proton donor in catalysis.

The protein belongs to the LpxC family. It depends on Zn(2+) as a cofactor.

It carries out the reaction a UDP-3-O-[(3R)-3-hydroxyacyl]-N-acetyl-alpha-D-glucosamine + H2O = a UDP-3-O-[(3R)-3-hydroxyacyl]-alpha-D-glucosamine + acetate. Its pathway is glycolipid biosynthesis; lipid IV(A) biosynthesis; lipid IV(A) from (3R)-3-hydroxytetradecanoyl-[acyl-carrier-protein] and UDP-N-acetyl-alpha-D-glucosamine: step 2/6. Its function is as follows. Catalyzes the hydrolysis of UDP-3-O-myristoyl-N-acetylglucosamine to form UDP-3-O-myristoylglucosamine and acetate, the committed step in lipid A biosynthesis. The protein is UDP-3-O-acyl-N-acetylglucosamine deacetylase of Shewanella baltica (strain OS223).